The primary structure comprises 394 residues: Probable peptidoglycan glycosyltransferase FtsW (394 aa).

Residues 1-27 lie on the Cytoplasmic side of the membrane; sequence MSALRSVAGLLQRWLLPARPAGLYDRQ. Residues 28 to 48 traverse the membrane as a helical segment; sequence LVVLALALMAVGLVIVASASI. Residues 49-64 lie on the Periplasmic side of the membrane; it reads PEGIAINNDPFMFVKR. A helical membrane pass occupies residues 65-85; it reads HGLFLVMALGISWFVLQVPMA. Residues 86–88 are Cytoplasmic-facing; the sequence is RWQ. The helical transmembrane segment at 89–109 threads the bilayer; the sequence is HYNGPMLVLAILMLVLVLLVG. At 110-123 the chain is on the periplasmic side; sequence RSVNGSIRWLPLGP. A helical membrane pass occupies residues 124–144; that stretch reads FNLQPAEFGKLALFVYLAGYL. At 145–154 the chain is on the cytoplasmic side; the sequence is VRRQSEVRER. Residues 155 to 175 traverse the membrane as a helical segment; sequence FIGFMKPMAVLFVVAILLLAQ. Residue Pro-176 is a topological domain, periplasmic. The chain crosses the membrane as a helical span at residues 177–197; the sequence is DLGSVVVMFVTSLGMLFLAGA. Residue Arg-198 is a topological domain, cytoplasmic. A helical transmembrane segment spans residues 199-219; sequence LGQFIGLILVGVSAVVTLVIA. The Periplasmic segment spans residues 220–279; that stretch reads EPYRMRRVTSFLDPWADPFGSGYQLTQSLMAFGRGSWFGEGLGNSIQKMEYLPEAHTDFV. Residues 280–300 traverse the membrane as a helical segment; that stretch reads FAILGEELGYAGVLGALFLIF. The Cytoplasmic segment spans residues 301 to 322; the sequence is ALSFKALKLGHQALVAERLYEG. The chain crosses the membrane as a helical span at residues 323–343; the sequence is YLAIGIGIWFSFQTFVNVGAA. At 344 to 354 the chain is on the periplasmic side; that stretch reads SGMMPTKGLTL. The helical transmembrane segment at 355–375 threads the bilayer; the sequence is PLVSYGGSSLIIMMVAVSMLV. The Cytoplasmic segment spans residues 376–394; the sequence is RIDFELRQASAQARVREVS.

The protein belongs to the SEDS family. FtsW subfamily.

The protein resides in the cell inner membrane. It catalyses the reaction [GlcNAc-(1-&gt;4)-Mur2Ac(oyl-L-Ala-gamma-D-Glu-L-Lys-D-Ala-D-Ala)](n)-di-trans,octa-cis-undecaprenyl diphosphate + beta-D-GlcNAc-(1-&gt;4)-Mur2Ac(oyl-L-Ala-gamma-D-Glu-L-Lys-D-Ala-D-Ala)-di-trans,octa-cis-undecaprenyl diphosphate = [GlcNAc-(1-&gt;4)-Mur2Ac(oyl-L-Ala-gamma-D-Glu-L-Lys-D-Ala-D-Ala)](n+1)-di-trans,octa-cis-undecaprenyl diphosphate + di-trans,octa-cis-undecaprenyl diphosphate + H(+). The protein operates within cell wall biogenesis; peptidoglycan biosynthesis. Functionally, peptidoglycan polymerase that is essential for cell division. The protein is Probable peptidoglycan glycosyltransferase FtsW of Aeromonas salmonicida (strain A449).